The sequence spans 347 residues: NADH-ubiquinone oxidoreductase chain 2 (347 aa).

11 helical membrane-spanning segments follow: residues 3–23 (PPIL…VMLS), 25–45 (HWLL…PVLM), 66–86 (ASML…QWVV), 96–116 (IMMT…FWVP), 122–142 (ITLT…MSVL), 149–169 (INTN…GWGG), 178–198 (IMAY…IYNP), 201–221 (MILN…LFML), 237–257 (FPLI…LPPL), 274–294 (NMII…YFYL), and 323–343 (TILL…TPML).

Belongs to the complex I subunit 2 family. In terms of assembly, core subunit of respiratory chain NADH dehydrogenase (Complex I) which is composed of 45 different subunits. Interacts with TMEM242.

It is found in the mitochondrion inner membrane. The enzyme catalyses a ubiquinone + NADH + 5 H(+)(in) = a ubiquinol + NAD(+) + 4 H(+)(out). Core subunit of the mitochondrial membrane respiratory chain NADH dehydrogenase (Complex I) which catalyzes electron transfer from NADH through the respiratory chain, using ubiquinone as an electron acceptor. Essential for the catalytic activity and assembly of complex I. This chain is NADH-ubiquinone oxidoreductase chain 2, found in Canis rufus (Red wolf).